The following is a 502-amino-acid chain: Probable cytochrome P450 6a23 (502 aa).

Position 445 (Cys445) interacts with heme.

Belongs to the cytochrome P450 family. It depends on heme as a cofactor.

Its subcellular location is the endoplasmic reticulum membrane. The protein localises to the microsome membrane. Its function is as follows. May be involved in the metabolism of insect hormones and in the breakdown of synthetic insecticides. The protein is Probable cytochrome P450 6a23 (Cyp6a23) of Drosophila melanogaster (Fruit fly).